The sequence spans 419 residues: Serine hydroxymethyltransferase (419 aa).

(6S)-5,6,7,8-tetrahydrofolate contacts are provided by residues Leu121 and 125–127; that span reads GHL. Lys229 carries the N6-(pyridoxal phosphate)lysine modification. 354–356 is a (6S)-5,6,7,8-tetrahydrofolate binding site; sequence SPF.

This sequence belongs to the SHMT family. As to quaternary structure, homodimer. Pyridoxal 5'-phosphate serves as cofactor.

It is found in the cytoplasm. The enzyme catalyses (6R)-5,10-methylene-5,6,7,8-tetrahydrofolate + glycine + H2O = (6S)-5,6,7,8-tetrahydrofolate + L-serine. The protein operates within one-carbon metabolism; tetrahydrofolate interconversion. It participates in amino-acid biosynthesis; glycine biosynthesis; glycine from L-serine: step 1/1. Its function is as follows. Catalyzes the reversible interconversion of serine and glycine with tetrahydrofolate (THF) serving as the one-carbon carrier. This reaction serves as the major source of one-carbon groups required for the biosynthesis of purines, thymidylate, methionine, and other important biomolecules. Also exhibits THF-independent aldolase activity toward beta-hydroxyamino acids, producing glycine and aldehydes, via a retro-aldol mechanism. The protein is Serine hydroxymethyltransferase of Coxiella burnetii (strain RSA 493 / Nine Mile phase I).